Here is a 141-residue protein sequence, read N- to C-terminus: Hemoglobin subunit alpha (141 aa).

One can recognise a Globin domain in the interval 1–141; sequence VLSPADKTNV…VSTVLTSKYR (141 aa). S3 carries the phosphoserine modification. K7 carries the N6-succinyllysine modification. The residue at position 8 (T8) is a Phosphothreonine. K11 carries the N6-succinyllysine modification. K16 carries the N6-acetyllysine; alternate modification. Residue K16 is modified to N6-succinyllysine; alternate. Residue Y24 is modified to Phosphotyrosine. S35 bears the Phosphoserine mark. An N6-succinyllysine modification is found at K40. S49 carries the phosphoserine modification. Position 58 (H58) interacts with O2. H87 contacts heme b. At S102 the chain carries Phosphoserine. Position 108 is a phosphothreonine (T108). S124 bears the Phosphoserine mark. 2 positions are modified to phosphothreonine: T134 and T137. At S138 the chain carries Phosphoserine.

It belongs to the globin family. Heterotetramer of two alpha chains and two beta chains. Red blood cells.

Involved in oxygen transport from the lung to the various peripheral tissues. Its function is as follows. Hemopressin acts as an antagonist peptide of the cannabinoid receptor CNR1. Hemopressin-binding efficiently blocks cannabinoid receptor CNR1 and subsequent signaling. This Martes foina (Beech marten) protein is Hemoglobin subunit alpha (HBA).